Here is an 833-residue protein sequence, read N- to C-terminus: Leucine--tRNA ligase (833 aa).

The 'HIGH' region motif lies at 41–52 (PYPSGAGLHVGH). The short motif at 610–614 (KMSKS) is the 'KMSKS' region element. ATP is bound at residue K613.

This sequence belongs to the class-I aminoacyl-tRNA synthetase family.

The protein resides in the cytoplasm. The enzyme catalyses tRNA(Leu) + L-leucine + ATP = L-leucyl-tRNA(Leu) + AMP + diphosphate. This chain is Leucine--tRNA ligase, found in Streptococcus pyogenes serotype M6 (strain ATCC BAA-946 / MGAS10394).